We begin with the raw amino-acid sequence, 154 residues long: MVDVAFVCLGNICRSPMAEAIMRQRLKDRNIHDIKVHSRGTGSWNLGEPPHEGTQKILNKHNIPFDGMISELFEATDDFDYIVAMDQSNVDNIKSINPNLKGQLFKLLEFSNMEESDVPDPYYTNNFEGVYDMVLSSCDNLIDYIVKDANLKEG.

C8 serves as the catalytic Nucleophile. The active site involves R14. The active-site Proton donor is the D120.

The protein belongs to the low molecular weight phosphotyrosine protein phosphatase family. Interacts with host CORO1A. Post-translationally, phosphorylations at Tyr-122 and Tyr-123 are essential for phosphatase activity.

The protein resides in the secreted. The catalysed reaction is O-phospho-L-tyrosyl-[protein] + H2O = L-tyrosyl-[protein] + phosphate. In terms of biological role, secreted tyrosine phosphatase that plays a critical role during infection as a bacterial effector protein that counteracts host defenses. Required for intramacrophage survival. This is Low molecular weight protein-tyrosine-phosphatase PtpA (ptpA) from Staphylococcus aureus (strain MSSA476).